We begin with the raw amino-acid sequence, 214 residues long: Membrane-spanning 4-domains subfamily A member 3 (214 aa).

A disordered region spans residues methionine 1–threonine 31. The Cytoplasmic portion of the chain corresponds to methionine 1–glutamine 49. Residues valine 50 to glycine 70 traverse the membrane as a helical segment. Topologically, residues serine 71–histidine 81 are extracellular. A helical membrane pass occupies residues phenylalanine 82–serine 102. The Cytoplasmic segment spans residues glycine 103–methionine 124. The chain crosses the membrane as a helical span at residues asparagine 125–valine 145. At asparagine 146 to serine 175 the chain is on the extracellular side. The chain crosses the membrane as a helical span at residues leucine 176–cysteine 196. Over asparagine 197–valine 214 the chain is Cytoplasmic.

It belongs to the MS4A family. As to quaternary structure, interacts with CDKN3. Interacts with CDKN3-CDK2 complexes through its binding to CDKN3; this interaction facilitates dissociation of cyclin A from CDKN3-CDK2 complexes. As to expression, expressed specifically in hematopoietic cells and tissues.

Its subcellular location is the endomembrane system. It localises to the cytoplasm. The protein resides in the perinuclear region. Its function is as follows. Hematopoietic modulator for the G1-S cell cycle transition. Modulates the level of phosphorylation of cyclin-dependent kinase 2 (CDK2) through its direct binding to cyclin-dependent kinase inhibitor 3 (CDKN3/KAP). The polypeptide is Membrane-spanning 4-domains subfamily A member 3 (MS4A3) (Homo sapiens (Human)).